Here is a 116-residue protein sequence, read N- to C-terminus: Host transcription reprogramming factor 4 (116 aa).

The signal sequence occupies residues 1–24 (MHIIHISKFMALLAISTIAIPTRG). Residues 24 to 53 (GRSEVDSRDVNQAQTVTSGSSIAPSGSEKR) form a disordered region. A compositionally biased stretch (polar residues) spans 33 to 47 (VNQAQTVTSGSSIAP). The segment at 74–96 (FQCPHCKDGISNRVALYTHVKAF) adopts a C2H2-type; degenerate zinc-finger fold.

The protein resides in the secreted. Its subcellular location is the host nucleus. Its function is as follows. Probable secreted effector that translocates into the nuclei of host cells to reprogram the expression of targeted genes by binding on effector binding elements in rice. The protein is Host transcription reprogramming factor 4 of Pyricularia oryzae (strain 70-15 / ATCC MYA-4617 / FGSC 8958) (Rice blast fungus).